We begin with the raw amino-acid sequence, 209 residues long: Glycerol-3-phosphate acyltransferase (209 aa).

Helical transmembrane passes span 7 to 27, 85 to 105, 117 to 137, 142 to 162, and 166 to 183; these read IELAGIAGAYFLGSLSSAIIV, AIILVGFASFIGHLYPIFFGF, VMFGLSLPIGAAVAGTWLFVA, ISSLSALIATALAPLYIYLLA, and MAWVSVTAIMTLILFWRH.

The protein belongs to the PlsY family. In terms of assembly, probably interacts with PlsX.

The protein localises to the cell inner membrane. The enzyme catalyses an acyl phosphate + sn-glycerol 3-phosphate = a 1-acyl-sn-glycero-3-phosphate + phosphate. Its pathway is lipid metabolism; phospholipid metabolism. Catalyzes the transfer of an acyl group from acyl-phosphate (acyl-PO(4)) to glycerol-3-phosphate (G3P) to form lysophosphatidic acid (LPA). This enzyme utilizes acyl-phosphate as fatty acyl donor, but not acyl-CoA or acyl-ACP. The sequence is that of Glycerol-3-phosphate acyltransferase from Hydrogenovibrio crunogenus (strain DSM 25203 / XCL-2) (Thiomicrospira crunogena).